Reading from the N-terminus, the 438-residue chain is MAHELTVQELEKFSADFNKNPKNKVVARAAQRSGVLEASYNDRVQSELTRVFSTELDTDNVTNQKHSGRCWLFATLNVLRHEFGKKYKAKDFTFSQAYNFFWDKIERANMFYNRILDSADMPLDSRQVKTDLDFAGTDGGQFQMAAALVEKYGVVPSYAMPETFNTNDTTGFATALGDKLKKDALVLRKLKQEGKDDEIKKTREKFLSEVYQMTAIAVGEPPKKFDLEYRDDDKKYHLEKDLTPLEFLHKYLGGVDFDDYVVLTNAPDHEYDKLYGLPAEDNVSGSIRIKLLNVPMEYLTAASIAQLKDGEAVWFGNDVLRQMDRKTGYLDTNLYKLDDLFGVDLKMSKADRLKTGVGEVSHAMTLVGVDEDNGEVRQWKVENSWGDKSGAKGYYVMNNEWFNDYVYEVVVHKKYLTDKQKELAEGPITDLPAWDSLA.

Active-site residues include Cys70, His362, and Asn383.

It belongs to the peptidase C1 family.

It localises to the cytoplasm. Its function is as follows. Can hydrolyze internal peptide bonds in Met-enkephalin and bradykinin; however, hydrolysis of alpha-, beta-, and kappa-caseins is not detected. The polypeptide is Aminopeptidase E (pepE) (Lactobacillus helveticus (Lactobacillus suntoryeus)).